The primary structure comprises 367 residues: Probable butyrate kinase (367 aa).

This sequence belongs to the acetokinase family.

It is found in the cytoplasm. It catalyses the reaction butanoate + ATP = butanoyl phosphate + ADP. This Bacillus cereus (strain ZK / E33L) protein is Probable butyrate kinase.